The primary structure comprises 343 residues: Cyclin-Y-like protein 1-B (343 aa).

Residues 1-69 form a disordered region; sequence MGNTVTCCVS…ECNPSDHPQA (69 aa). Basic and acidic residues predominate over residues 17–28; that stretch reads AGRDRRVAERGE. Residues 145 to 267 enclose the Cyclin N-terminal domain; it reads DIFDEKLHPL…FLELLQFNIN (123 aa).

This sequence belongs to the cyclin family. Cyclin Y subfamily.

This is Cyclin-Y-like protein 1-B (ccnyl1-b) from Xenopus laevis (African clawed frog).